A 239-amino-acid chain; its full sequence is MFTGLVEHIGTVLQVTEKDTTASGGDGVSMVIGDCSKILEDVQLGDSICTNGVCLTVTEFDMARSQFKVGISPETLRRSDLGELKPGSKVNLERAVKADVRMGGHVVQGHVDTIATIVNRRGDGNAINFTFKLRDSQYGKYIVEKGFIAIDGTSLTVTDVDHEQSEFSISMVSYTQEKVIMPLKNSGDSVNIEVDLTGKLIEKQIELSLLSYIKDETSPLSTLIGKLVEKKVDDVLKRN.

2 Lumazine-binding repeats span residues 1–105 (MFTG…MGGH) and 106–205 (VVQG…EKQI). 2,4-dihydroxypteridine is bound by residues 4–6 (GLV), 54–56 (CLT), 70–75 (GISPET), 109–111 (GHV), lysine 145, 154–156 (SLT), and 170–175 (SMVSYT).

Homotrimer.

The enzyme catalyses 2 6,7-dimethyl-8-(1-D-ribityl)lumazine + H(+) = 5-amino-6-(D-ribitylamino)uracil + riboflavin. It participates in cofactor biosynthesis; riboflavin biosynthesis; riboflavin from 2-hydroxy-3-oxobutyl phosphate and 5-amino-6-(D-ribitylamino)uracil: step 2/2. Catalyzes the dismutation of two molecules of 6,7-dimethyl-8-ribityllumazine, resulting in the formation of riboflavin and 5-amino-6-(D-ribitylamino)uracil. This Meyerozyma guilliermondii (strain ATCC 6260 / CBS 566 / DSM 6381 / JCM 1539 / NBRC 10279 / NRRL Y-324) (Yeast) protein is Riboflavin synthase (RIB5).